A 440-amino-acid chain; its full sequence is Proline--tRNA ligase (440 aa).

This sequence belongs to the class-II aminoacyl-tRNA synthetase family. ProS type 2 subfamily. In terms of assembly, homodimer.

The protein resides in the cytoplasm. The enzyme catalyses tRNA(Pro) + L-proline + ATP = L-prolyl-tRNA(Pro) + AMP + diphosphate. Its function is as follows. Catalyzes the attachment of proline to tRNA(Pro) in a two-step reaction: proline is first activated by ATP to form Pro-AMP and then transferred to the acceptor end of tRNA(Pro). The sequence is that of Proline--tRNA ligase from Azorhizobium caulinodans (strain ATCC 43989 / DSM 5975 / JCM 20966 / LMG 6465 / NBRC 14845 / NCIMB 13405 / ORS 571).